A 353-amino-acid chain; its full sequence is Phosphate acyltransferase (353 aa).

It belongs to the PlsX family. As to quaternary structure, homodimer. Probably interacts with PlsY.

It localises to the cytoplasm. It carries out the reaction a fatty acyl-[ACP] + phosphate = an acyl phosphate + holo-[ACP]. Its pathway is lipid metabolism; phospholipid metabolism. Functionally, catalyzes the reversible formation of acyl-phosphate (acyl-PO(4)) from acyl-[acyl-carrier-protein] (acyl-ACP). This enzyme utilizes acyl-ACP as fatty acyl donor, but not acyl-CoA. The sequence is that of Phosphate acyltransferase from Syntrophobacter fumaroxidans (strain DSM 10017 / MPOB).